Here is a 249-residue protein sequence, read N- to C-terminus: 3-deoxy-manno-octulosonate cytidylyltransferase (249 aa).

The protein belongs to the KdsB family.

Its subcellular location is the cytoplasm. It catalyses the reaction 3-deoxy-alpha-D-manno-oct-2-ulosonate + CTP = CMP-3-deoxy-beta-D-manno-octulosonate + diphosphate. The protein operates within nucleotide-sugar biosynthesis; CMP-3-deoxy-D-manno-octulosonate biosynthesis; CMP-3-deoxy-D-manno-octulosonate from 3-deoxy-D-manno-octulosonate and CTP: step 1/1. Its pathway is bacterial outer membrane biogenesis; lipopolysaccharide biosynthesis. Functionally, activates KDO (a required 8-carbon sugar) for incorporation into bacterial lipopolysaccharide in Gram-negative bacteria. The polypeptide is 3-deoxy-manno-octulosonate cytidylyltransferase (Photorhabdus laumondii subsp. laumondii (strain DSM 15139 / CIP 105565 / TT01) (Photorhabdus luminescens subsp. laumondii)).